The chain runs to 257 residues: Small ribosomal subunit protein uS3 (257 aa).

In terms of domain architecture, KH type-2 spans 40-110 (IRKYLSTKYK…LVSLKVVEVQ (71 aa)). Residues 223–257 (ANKEFSRSSKPKKGSFNRSSRSKNTKPAPKQAVSE) are disordered. The segment covering 231–246 (SKPKKGSFNRSSRSKN) has biased composition (basic residues).

Belongs to the universal ribosomal protein uS3 family. Part of the 30S ribosomal subunit. Forms a tight complex with proteins S10 and S14.

Its function is as follows. Binds the lower part of the 30S subunit head. Binds mRNA in the 70S ribosome, positioning it for translation. The protein is Small ribosomal subunit protein uS3 of Ureaplasma parvum serovar 3 (strain ATCC 27815 / 27 / NCTC 11736).